Here is a 114-residue protein sequence, read N- to C-terminus: MSEDTIFGKIIRREIPADIVYEDDLCLAFRDVAPQAPVHILVIPKQPIANLLEATAEHQALLGHLLLTVKAIAAQEGLTEGYRTVINTGPAGGQTVYHLHIHLLGGRSLAWPPG.

One can recognise an HIT domain in the interval 6–114 (IFGKIIRREI…GGRSLAWPPG (109 aa)). A Histidine triad motif motif is present at residues 98-102 (HLHIH).

This is an uncharacterized protein from Synechococcus elongatus (strain ATCC 33912 / PCC 7942 / FACHB-805) (Anacystis nidulans R2).